Reading from the N-terminus, the 698-residue chain is MFKNLCDKIMTQKILITSALPYANGPLHFGHIAGAYLPADCYARFQRLMKKDVLYICGSDEYGIAITLSADLAGRTPQEHVDLFHHINQSFFEQLQISFDHYSRTTWKGHVEPTHQFFNDLLQNGYIEERTTDQLYSEKDQKFLADRYVVGTCPRCGFENARGDECPCCGASYEATELKNPRSKLTDASLILRPTKHWFLLLEKFKKPLMEWLETKNWKPNVINFIRGYIDHLHARAITRDMKWGISVPLPDSEGKVLYVWFDAPIGYISATKEWALLRGEEKLWEKYWLDPETKLVNFIGKDNIPFHASIFPAMIMGQNQPYKLVDELPANEFYNLEGKQFSKSDGWYIDLEDFFKHYTSDQIRYAIASNAPETSDSEFTWKDFQLRCNSDLLGKYGNLVNRVLVFIHNQCQGKVPESGVLEEQDRKFLKNIQDLVDQAAASYSTFKVRKASQIMMELSQLGNVYFDSKKPWQDAKNDYTKGRMHTTLNCCMECLKALALISFPIIPTAASKVWQFLGFQTPLEQEDWNRVKIEKLPLNQKILTPQILFQRVENEAVEREILKLQQLSLTKEKKSTPQSTQISISENILLKPLVDIEDFRKLDLRVGKIIQANPVPKSKKLFQLLVDIGIEKRIVVAGVAEFYKVEDLIGKNVVVVANLKPANLMGVTSQGMLLAAKGEGNLKLISIEDVAPGSLVS.

The 'HIGH' region motif lies at 21 to 31 (PYANGPLHFGH). Residues C153, C156, C166, and C169 each contribute to the Zn(2+) site. Residues 341–345 (QFSKS) carry the 'KMSKS' region motif. K344 serves as a coordination point for ATP. One can recognise a tRNA-binding domain in the interval 599 to 698 (DFRKLDLRVG…EDVAPGSLVS (100 aa)).

It belongs to the class-I aminoacyl-tRNA synthetase family. MetG type 1 subfamily. In terms of assembly, homodimer. Zn(2+) serves as cofactor.

It localises to the cytoplasm. The catalysed reaction is tRNA(Met) + L-methionine + ATP = L-methionyl-tRNA(Met) + AMP + diphosphate. Is required not only for elongation of protein synthesis but also for the initiation of all mRNA translation through initiator tRNA(fMet) aminoacylation. This Protochlamydia amoebophila (strain UWE25) protein is Methionine--tRNA ligase.